The following is a 313-amino-acid chain: 2,3-dihydroxyphenylpropionate/2,3-dihydroxicinnamic acid 1,2-dioxygenase (313 aa).

The active-site Proton donor is the histidine 115. Catalysis depends on histidine 179, which acts as the Proton acceptor.

The protein belongs to the LigB/MhpB extradiol dioxygenase family. As to quaternary structure, homotetramer. The cofactor is Fe(2+).

The enzyme catalyses 3-(2,3-dihydroxyphenyl)propanoate + O2 = (2Z,4E)-2-hydroxy-6-oxonona-2,4-dienedioate + H(+). It carries out the reaction (2E)-3-(2,3-dihydroxyphenyl)prop-2-enoate + O2 = (2Z,4E,7E)-2-hydroxy-6-oxonona-2,4,7-trienedioate + H(+). The protein operates within aromatic compound metabolism; 3-phenylpropanoate degradation. Functionally, catalyzes the non-heme iron(II)-dependent oxidative cleavage of 2,3-dihydroxyphenylpropionic acid and 2,3-dihydroxicinnamic acid into 2-hydroxy-6-ketononadienedioate and 2-hydroxy-6-ketononatrienedioate, respectively. In Mycobacterium ulcerans (strain Agy99), this protein is 2,3-dihydroxyphenylpropionate/2,3-dihydroxicinnamic acid 1,2-dioxygenase.